Consider the following 34-residue polypeptide: MSDIN-like toxin proprotein 3 (34 aa).

Positions 1–10 (MSDINVIRAP) are excised as a propeptide. The segment at residues 11 to 18 (LLILSILP) is a cross-link (cyclopeptide (Leu-Pro)). A propeptide spanning residues 19–34 (CVGDDIEVLRRGEGLS) is cleaved from the precursor.

This sequence belongs to the MSDIN fungal toxin family. In terms of processing, processed by the macrocyclase-peptidase enzyme POPB to yield a toxic cyclic octapeptide. POPB first removes 10 residues from the N-terminus. Conformational trapping of the remaining peptide forces the enzyme to release this intermediate rather than proceed to macrocyclization. The enzyme rebinds the remaining peptide in a different conformation and catalyzes macrocyclization of the N-terminal 8 residues. Expressed in basidiocarps.

Functionally, probable toxin that belongs to the MSDIN-like toxin family responsible for a large number of food poisoning cases and deaths. The sequence is that of MSDIN-like toxin proprotein 3 from Amanita exitialis (Guangzhou destroying angel).